We begin with the raw amino-acid sequence, 1036 residues long: MGFALERFAEAVDPALECKLCGQVLEEPLCTPCGHVFCASCLLPWAVRRRRCPLQCQPLAPGELYRVLPLRSLIQKLRVQCDYRARGCGHSVRLHELEAHVEHCDFGPARRLRSRGGCASGLGGGEVPARGGCGPTPRAGRGGGARGGPPGGRWGRGRGPGPRVLAWRRREKALLAQLWALQGEVQLTARRYQEKFTQYMAHVRNFVGDLGGGHRRDGEHKPFTIVLERENDTLGFNIIGGRPNQNNQEGTSTEGIYVSKILENGPADRADGLEIHDKIMEVNGKDLSKATHEEAVEAFRNAKEPIVVQVLRRTPLSRPAYGMASEVQLMNASTQTDITFEHIMALAKLRPPTPPVPDICPFLLSDSCHSLHPMEHEFYEDNEYISSLPADADRTEDFEYEEVELCRVSSQEKLGLTVCYRTDDEEDTGIYVSEVDPNSIAAKDGRIREGDRILQINGEDVQNREEAVALLSNDECKRIVLLVARPEIQLDEGWLEDERNEFLEELNLEMLEEEHNEAMQPTANEVEQPKKQEEEEGTTDTATSSSNNHEKDSGVGRTDESLRNDESSEQENAAEDPNSTSLKSKRDLGQSQDTLGSVELQYNESLVSGEYIDSDCIGNPDEDCERFRQLLELKCKIRNHGEYDLYYSSSTIECNQGEQEGVEHELQLLNEELRNIELECQNIMQAHRLQKVTDQYGDIWTLHDGGFRNYNTSIDMQRGKLDDIMEHPEKSDKDSSSAYNTAESCRSTPLTVDRSPDSSLPRVINLTNKKNLRSTMAATQSSSGQSSKESTSTKAKTTEQGCSAESKEKVLEGSKLPDQEKAVSEHIPYLSPYHSSSYRYANIPAHARHYQSYMQLIQQKSAVEYAQSQLSLVSMCKESQKCSEPKMEWKVKIRSDGTRYITKRPVRDRILKERALKIKEERSGMTTDDDTMSEMKMGRYWSKEERKQHLVRAKEQRRRREFMMRSRLECLKESPQSGSEGKKEINIIELSHKKMMKKRNKKILDNWMTIQELMTHGAKSPDGTRVHNAFLSVTTV.

An RING-type; degenerate zinc finger spans residues 18 to 56; sequence CKLCGQVLEEPLCTPCGHVFCASCLLPWAVRRRRCPLQC. A compositionally biased stretch (gly residues) spans 129–160; it reads ARGGCGPTPRAGRGGGARGGPPGGRWGRGRGP. A disordered region spans residues 129 to 161; sequence ARGGCGPTPRAGRGGGARGGPPGGRWGRGRGPG. 2 consecutive PDZ domains span residues 224-314 and 402-486; these read TIVL…LRRT and EVEL…VARP. The segment at 515-590 is disordered; it reads HNEAMQPTAN…SLKSKRDLGQ (76 aa). Positions 548–566 are enriched in basic and acidic residues; sequence NHEKDSGVGRTDESLRNDE. Residues 655-689 adopt a coiled-coil conformation; that stretch reads NQGEQEGVEHELQLLNEELRNIELECQNIMQAHRL. A compositionally biased stretch (basic and acidic residues) spans 726–735; the sequence is EHPEKSDKDS. The interval 726–819 is disordered; the sequence is EHPEKSDKDS…VLEGSKLPDQ (94 aa). Over residues 736–750 the composition is skewed to polar residues; it reads SSAYNTAESCRSTPL. Over residues 774 to 799 the composition is skewed to low complexity; that stretch reads STMAATQSSSGQSSKESTSTKAKTTE. The span at 805-819 shows a compositional bias: basic and acidic residues; the sequence is ESKEKVLEGSKLPDQ.

This is PDZ domain-containing RING finger protein 4 (PDZRN4) from Homo sapiens (Human).